We begin with the raw amino-acid sequence, 903 residues long: Protein translocase subunit SecA (903 aa).

ATP contacts are provided by residues Gln87, 105–109 (GEGKT), and Asp512. Residues Cys887, Cys889, Cys898, and His899 each contribute to the Zn(2+) site.

Belongs to the SecA family. Monomer and homodimer. Part of the essential Sec protein translocation apparatus which comprises SecA, SecYEG and auxiliary proteins SecDF-YajC and YidC. It depends on Zn(2+) as a cofactor.

Its subcellular location is the cell inner membrane. The protein localises to the cytoplasm. It catalyses the reaction ATP + H2O + cellular proteinSide 1 = ADP + phosphate + cellular proteinSide 2.. Part of the Sec protein translocase complex. Interacts with the SecYEG preprotein conducting channel. Has a central role in coupling the hydrolysis of ATP to the transfer of proteins into and across the cell membrane, serving both as a receptor for the preprotein-SecB complex and as an ATP-driven molecular motor driving the stepwise translocation of polypeptide chains across the membrane. The sequence is that of Protein translocase subunit SecA from Photorhabdus laumondii subsp. laumondii (strain DSM 15139 / CIP 105565 / TT01) (Photorhabdus luminescens subsp. laumondii).